The sequence spans 260 residues: Ras-related protein Rab-32B (260 aa).

The tract at residues 11-50 (FDTDPDVSTDSNYNNNNNSNNNNSIISNSNNNNNNNNNNV) is disordered. Positions 21-49 (SNYNNNNNSNNNNSIISNSNNNNNNNNNN) are enriched in low complexity. 66 to 73 (GDYAVGKS) contacts GTP. The short motif at 88-96 (YKLTIGVDF) is the Effector region element. GTP contacts are provided by residues 115-119 (DIAGH) and 177-180 (NKSD). Residues 231–260 (TNHPPKPEEDTLELTKTNGEKSDDSKSCCK) are disordered. Positions 248–260 (NGEKSDDSKSCCK) are enriched in basic and acidic residues. Residues Cys-258 and Cys-259 are each lipidated (S-geranylgeranyl cysteine).

Belongs to the small GTPase superfamily. Rab family.

This is Ras-related protein Rab-32B (rab32B) from Dictyostelium discoideum (Social amoeba).